We begin with the raw amino-acid sequence, 734 residues long: Elongation factor 2 (734 aa).

A tr-type G domain is found at 18–259; it reads EQIRNIGITA…MVVKYVPNPR (242 aa). GTP contacts are provided by residues 27 to 34, 93 to 97, and 147 to 150; these read AHVDHGKT, DTPGH, and NKID. Diphthamide is present on H600.

It belongs to the TRAFAC class translation factor GTPase superfamily. Classic translation factor GTPase family. EF-G/EF-2 subfamily.

Its subcellular location is the cytoplasm. In terms of biological role, catalyzes the GTP-dependent ribosomal translocation step during translation elongation. During this step, the ribosome changes from the pre-translocational (PRE) to the post-translocational (POST) state as the newly formed A-site-bound peptidyl-tRNA and P-site-bound deacylated tRNA move to the P and E sites, respectively. Catalyzes the coordinated movement of the two tRNA molecules, the mRNA and conformational changes in the ribosome. The polypeptide is Elongation factor 2 (fusA) (Desulfurococcus mucosus (Desulfurococcus mobilis)).